A 280-amino-acid chain; its full sequence is L-proline cis-4-hydroxylase (280 aa).

Fe cation-binding residues include H106, D108, and H154. R164 lines the 2-oxoglutarate pocket.

Belongs to the L-proline cis-4-/cis-3-hydroxylase family. It depends on Fe(2+) as a cofactor.

It catalyses the reaction L-proline + 2-oxoglutarate + O2 = cis-4-hydroxy-L-proline + succinate + CO2. With respect to regulation, inhibited by metal ions such as Co(2+), Zn(2+), Cu(2+) or Ni(2+). Is also inhibited by EDTA or diethylpyrocarbonate (DEPC) in vitro. Unlike the procollagen-proline cis-3- and trans-4-hydroxylases from mammals, does not necessarily require L-ascorbate for activity although it does increase the activity of the enzyme. In terms of biological role, dioxygenase that catalyzes the 2-oxoglutarate-dependent selective hydroxylation of free L-proline to cis-4-hydroxy-L-proline (cis-4-Hyp). This chain is L-proline cis-4-hydroxylase, found in Mesorhizobium japonicum (strain LMG 29417 / CECT 9101 / MAFF 303099) (Mesorhizobium loti (strain MAFF 303099)).